We begin with the raw amino-acid sequence, 53 residues long: Weak toxin NWT (53 aa).

3 disulfide bridges follow: cysteine 6–cysteine 11, cysteine 17–cysteine 33, and cysteine 37–cysteine 48.

This sequence belongs to the three-finger toxin family. Ancestral subfamily. Orphan group II sub-subfamily. In terms of tissue distribution, expressed by the venom gland.

It is found in the secreted. In terms of biological role, binds with low affinity and weakly inhibits muscle nicotinic acetylcholine receptor (nAChR). The protein is Weak toxin NWT of Naja kaouthia (Monocled cobra).